We begin with the raw amino-acid sequence, 177 residues long: ATP synthase subunit b, chloroplastic (177 aa).

A helical membrane pass occupies residues 22–42; the sequence is ILETNIINLAAVVGIVVFFVG.

This sequence belongs to the ATPase B chain family. In terms of assembly, F-type ATPases have 2 components, F(1) - the catalytic core - and F(0) - the membrane proton channel. F(1) has five subunits: alpha(3), beta(3), gamma(1), delta(1), epsilon(1). F(0) has four main subunits: a(1), b(1), b'(1) and c(10-14). The alpha and beta chains form an alternating ring which encloses part of the gamma chain. F(1) is attached to F(0) by a central stalk formed by the gamma and epsilon chains, while a peripheral stalk is formed by the delta, b and b' chains.

It is found in the plastid. Its subcellular location is the chloroplast thylakoid membrane. Functionally, f(1)F(0) ATP synthase produces ATP from ADP in the presence of a proton or sodium gradient. F-type ATPases consist of two structural domains, F(1) containing the extramembraneous catalytic core and F(0) containing the membrane proton channel, linked together by a central stalk and a peripheral stalk. During catalysis, ATP synthesis in the catalytic domain of F(1) is coupled via a rotary mechanism of the central stalk subunits to proton translocation. In terms of biological role, component of the F(0) channel, it forms part of the peripheral stalk, linking F(1) to F(0). The polypeptide is ATP synthase subunit b, chloroplastic (Oedogonium cardiacum (Filamentous green alga)).